A 301-amino-acid polypeptide reads, in one-letter code: Hepatitis A virus cellular receptor 2 (301 aa).

The signal sequence occupies residues 1–21 (MFSHLPFDCVLLLLLLLLTRS). The Ig-like V-type domain maps to 22-124 (SEVEYRAEVG…PGIMNDEKFN (103 aa)). The Extracellular portion of the chain corresponds to 22-202 (SEVEYRAEVG…RDSGATIRIG (181 aa)). 3 cysteine pairs are disulfide-bonded: Cys38/Cys110, Cys52/Cys63, and Cys58/Cys109. Arg111 contributes to the a 1,2-diacyl-sn-glycero-3-phospho-L-serine binding site. Gly116 contacts Ca(2+). Met118 is an a 1,2-diacyl-sn-glycero-3-phospho-L-serine binding site. Asn119 contacts Ca(2+). Residue Thr145 is glycosylated (O-linked (GalNAc...) threonine). Asn172 carries an N-linked (GlcNAc...) asparagine glycan. The chain crosses the membrane as a helical span at residues 203–223 (IYIGAGICAGLALALIFGALI). Residues 224–301 (FKWYSHSKEK…QPLGCRFAMP (78 aa)) are Cytoplasmic-facing. The residue at position 265 (Tyr265) is a Phosphotyrosine; by ITK. Cys296 carries S-palmitoyl cysteine lipidation.

Belongs to the immunoglobulin superfamily. TIM family. As to quaternary structure, interacts with HMGB1; impairs HMGB1 binding to B-DNA and likely HMGB1-mediated innate immune response. Interacts with BAG6. Interacts (phosphorylated) with PIK3R1 and PIK3R2. Interacts (not dependent on its phosphorylation status) with FYN. Interacts (in basal state T-cells) with VAV1; AKT1/2, LCP2, ZAP70, SYK, PIK3R1, FYN, SH3BP2 and SH2D2A. Interacts (in activated T-cells) with LCK and PLCG. Interacts with ILF3; this interaction promotes ILF3 ubiquitination and degradation. Post-translationally, O-glycosylated with core 1 or possibly core 8 glycans. Phosphorylated on tyrosine residues; modestly increased after TCR/CD28 stimulation. Can be phosphorylated in the cytoplasmic domain by FYN. Phosphorylation at Tyr-265 is increased by stimulation with ligand LGALS9. In terms of processing, palmitoylated by ZDHHC9 at Cys-296; palmitoylation stabilizes HAVCR2 by preventing binding to E3 ubiquitin ligase SYVN1, thereby suppressing its polyubiquitination and degradation. Post-translationally, ubiquitinated by SYVN1, leading to polyubiquitination and proteasomal degradation. In terms of tissue distribution, expressed in T-helper type 1 (Th1) lymphocytes. Expressed on regulatory T (Treg) cells after TCR stimulation. Expressed in dendritic cells and natural killer (NK) cells. Expressed in epithelial tissues. Expression is increased on CD4+ and CD8+ T-cells in chronic hepatitis C virus (HCV) infection. In progressive HIV-1 infection, expression is up-regulated on HIV-1-specific CD8 T-cells.

Its subcellular location is the cell membrane. It localises to the cell junction. Cell surface receptor implicated in modulating innate and adaptive immune responses. Generally accepted to have an inhibiting function. Reports on stimulating functions suggest that the activity may be influenced by the cellular context and/or the respective ligand. Regulates macrophage activation. Inhibits T-helper type 1 lymphocyte (Th1)-mediated auto- and alloimmune responses and promotes immunological tolerance. In CD8+ cells attenuates TCR-induced signaling, specifically by blocking NF-kappaB and NFAT promoter activities resulting in the loss of IL-2 secretion. The function may implicate its association with LCK proposed to impair phosphorylation of TCR subunits, and/or LGALS9-dependent recruitment of PTPRC to the immunological synapse. In contrast, shown to activate TCR-induced signaling in T-cells probably implicating ZAP70, LCP2, LCK and FYN. Expressed on Treg cells can inhibit Th17 cell responses. Receptor for LGALS9. Binding to LGALS9 is believed to result in suppression of T-cell responses; the resulting apoptosis of antigen-specific cells may implicate HAVCR2 phosphorylation and disruption of its association with BAG6. Binding to LGALS9 is proposed to be involved in innate immune response to intracellular pathogens. Expressed on Th1 cells interacts with LGALS9 expressed on Mycobacterium tuberculosis-infected macrophages to stimulate antibactericidal activity including IL-1 beta secretion and to restrict intracellular bacterial growth. However, the function as receptor for LGALS9 has been challenged. Also reported to enhance CD8+ T-cell responses to an acute infection such as by Listeria monocytogenes. Receptor for phosphatidylserine (PtSer); PtSer-binding is calcium-dependent. May recognize PtSer on apoptotic cells leading to their phagocytosis. Mediates the engulfment of apoptotic cells by dendritic cells. Expressed on T-cells, promotes conjugation but not engulfment of apoptotic cells. Expressed on dendritic cells (DCs) positively regulates innate immune response and in synergy with Toll-like receptors promotes secretion of TNF-alpha. In tumor-imfiltrating DCs suppresses nucleic acid-mediated innate immune repsonse by interaction with HMGB1 and interfering with nucleic acid-sensing and trafficking of nucleid acids to endosomes. Expressed on natural killer (NK) cells acts as a coreceptor to enhance IFN-gamma production in response to LGALS9. In contrast, shown to suppress NK cell-mediated cytotoxicity. Negatively regulates NK cell function in LPS-induced endotoxic shock. In Homo sapiens (Human), this protein is Hepatitis A virus cellular receptor 2 (HAVCR2).